Consider the following 917-residue polypeptide: MATNFLTKIFGSRNDRLLKQYRKTVARINAMEPDYEKLSDEALRGKTQEFKDRIAQGESLDALLPEAFAVVREGSKRIMKMRHFDVQLVGGMALHYGKIAEMRTGEGKTLTATLPVYLNALSGQGVHVVTVNDYLAGRDAQWMGRLYNFLGLTVGINLPQMPREEKQAAYQADITYGTNNEYGFDYLRDNMVYDARERVQRGLNYAIVDEVDSILIDEARTPLIISGQAEDHTALYVAMNKVVPLLVRQEGEADPRTGEGVTKPGDFTLDEKTHQVFLTEQGHENAERILASQGLIPEGASLYDPANITLVHHLYAALRANHLYHRDQHYVVQNGEIVIVDEFTGRLMAGRRWSEGLHQAVEAKEGVNIQAENQTLASITFQNYFRLYNKLSGMTGTADTEAYEFQEIYGLETVVIPPNRPSKRDDQLDRVYKTTREKYEAAIADIRECHERGQPVLVGTTSIENSEIIAELLNKAGLPHQVLNAKQHAREADIVAQAGRPGMITIATNMAGRGTDIVLGGNVEKAIAALEADESLSEADRAARVQELRAQWKLDHEKVTALGGLRIIATERHESRRIDNQLRGRSGRQGDPGSSRFYLSLDDQLMRIFAGDRVKAIMDRLKMPDGEAIEAGIVTRSIESAQRKVEARNFDIRKQLLEYDDVANDQRKVIYQQRNEILDAPDLGVLIDAMRDDCLADVVRQYVPAESVEEQWDLAGLEKALASDWQVSLALQKEVEGSDAITDEEILEKVQQAAREAFQAKVGQVGAENFTQFERMVLLQNFDTNWRDHLSALDYLRQGIHLRGYAQKQPKQEYKREAFELFRQLIDQVKNEVTRLMMTVQVQSSAQLDEATQAMEDRGEGISNVTYSSPTETGEVETVADAATAAQPAAAGVRVGRNDPCPCGSGKKYKQCHGKLA.

ATP is bound by residues Q87, 105–109 (GEGKT), and D516. The Zn(2+) site is built by C901, C903, C912, and H913.

Belongs to the SecA family. As to quaternary structure, monomer and homodimer. Part of the essential Sec protein translocation apparatus which comprises SecA, SecYEG and auxiliary proteins SecDF-YajC and YidC. Requires Zn(2+) as cofactor.

The protein resides in the cell inner membrane. It localises to the cytoplasm. The enzyme catalyses ATP + H2O + cellular proteinSide 1 = ADP + phosphate + cellular proteinSide 2.. In terms of biological role, part of the Sec protein translocase complex. Interacts with the SecYEG preprotein conducting channel. Has a central role in coupling the hydrolysis of ATP to the transfer of proteins into and across the cell membrane, serving both as a receptor for the preprotein-SecB complex and as an ATP-driven molecular motor driving the stepwise translocation of polypeptide chains across the membrane. This chain is Protein translocase subunit SecA, found in Acidovorax sp. (strain JS42).